Consider the following 152-residue polypeptide: Large ribosomal subunit protein bL9 (152 aa).

This sequence belongs to the bacterial ribosomal protein bL9 family.

Binds to the 23S rRNA. This Nostoc sp. (strain PCC 7120 / SAG 25.82 / UTEX 2576) protein is Large ribosomal subunit protein bL9.